The primary structure comprises 331 residues: MQGTFRDFLKPRTVDIQEQGERRAKIVLEPLERGFGHTLGNALRRVLLSSMPGSAVVQAEIEGVEHEYSSMEGVQEDVVDILLNLKSLAVRMHDRDEAELTVSVQGPGPVTAGDIQTAHDVEVKNPELLICTLTKAVAFNAKLMVARGRGYEAATQRDGDEDRVIGRLQLDASYSPVKRVAYTVESARVEQRTNLDKLVLDVETNGVLEPEEAVRFAAGLLRDQLSVFVDLEGGEFEAEQEEQEPDVDPILLRPIDELELTVRSANCLKAESIHYVGDLVQRTEVELLKTPNLGKKSLTEIKETLASHGLSLGMRLENWPPAGLGEDRVVG.

The alpha N-terminal domain (alpha-NTD) stretch occupies residues 1–232 (MQGTFRDFLK…DQLSVFVDLE (232 aa)). An alpha C-terminal domain (alpha-CTD) region spans residues 247 to 331 (VDPILLRPID…AGLGEDRVVG (85 aa)).

It belongs to the RNA polymerase alpha chain family. Homodimer. The RNAP catalytic core consists of 2 alpha, 1 beta, 1 beta' and 1 omega subunit. When a sigma factor is associated with the core the holoenzyme is formed, which can initiate transcription.

It catalyses the reaction RNA(n) + a ribonucleoside 5'-triphosphate = RNA(n+1) + diphosphate. DNA-dependent RNA polymerase catalyzes the transcription of DNA into RNA using the four ribonucleoside triphosphates as substrates. The chain is DNA-directed RNA polymerase subunit alpha from Alkalilimnicola ehrlichii (strain ATCC BAA-1101 / DSM 17681 / MLHE-1).